Consider the following 802-residue polypeptide: MDMNENKVRKKRHRITVVCTNCKKRKSKCDRGKPCSNCTRIGIENSCLYIKDTPSLPIDSIGSVADLTASELQIPNFIPIHPSYNKEYVNYIPNGRFFEIKRSAYTMFPIFTDACIEHRDAVIKAFTTFRTIVVKKTIDHYRKTGIDIERIALAGSQGLPKSFLPLTVFDEESSKNLVLEQQEPQQSYQIHSLLAEKFSHYRKNANLKLGDDSTTVYHNLIIKSLPDLGLLMDTIIPYYEQFIEPLVPIIEFKDFNVEIQKLYAKIELSNSLDPKIGENTLACIILLICRLCHLSSKFAVEKSINSSNYESILNMDTNIFVSLVQRTATGEKPLRKGTLYELQLLIMLRLCYWVGPDDGDGQQVEQSEILHGAIVSMCKHMGVWWDLVKYSEDSDLFITVDYKAVPKLGSQSEYIKLFRKIWCYVLCWDRKMMLLTGQECEIGRSYKMSPAPRFGNGWCDDILQYDYLLYGINNELHDDARKVDISMLEELVEMSEMRMGVLKEDDFSSNIYREQKLSLMLMKLNIIHGQLSWYERTGDKQSQETAYAKLFTLTVELGSKCVEYFSTPGIPEQRFYMNKIYEVILNRLNNVIVPGLILRIRYEEETGLDGMVKYLYGMSSMYFNEIGKEYYRTFKKMFHGKINYKILENGHRCMDMIIKFLQREMQNNNDTAVSKGDSMKLSDRLPLVAWDSNSTNDMFEPIHTVPRGPEIAALILEMVNVSDRYHYNNNVFQTVYKEARLVIDETTTTSQQDSLASAGTNRTNNIATNSGSGDDGGNGSDDSYLMRLIQELFDPLDFASAF.

The zn(2)-C6 fungal-type DNA-binding region spans 19–47 (CTNCKKRKSKCDRGKPCSNCTRIGIENSC). A compositionally biased stretch (polar residues) spans 749–768 (TSQQDSLASAGTNRTNNIAT). The interval 749–779 (TSQQDSLASAGTNRTNNIATNSGSGDDGGNG) is disordered.

It belongs to the OAF3 family.

Its subcellular location is the cytoplasm. The protein localises to the nucleus. The protein resides in the mitochondrion. In terms of biological role, transcriptional inhibitor with a significantly increased number of target genes in response to oleate. The chain is Oleate activated transcription factor 3 (OAF3) from Vanderwaltozyma polyspora (strain ATCC 22028 / DSM 70294 / BCRC 21397 / CBS 2163 / NBRC 10782 / NRRL Y-8283 / UCD 57-17) (Kluyveromyces polysporus).